A 76-amino-acid polypeptide reads, in one-letter code: MQKLTILLLVAAVLMSTQALIKGGGEKRPKEKIKFLSKRRTNAERWWEGDCTGWLDGCTSPAECCTAVCDATCKLW.

An N-terminal signal peptide occupies residues 1 to 19 (MQKLTILLLVAAVLMSTQA). The propeptide occupies 20-37 (LIKGGGEKRPKEKIKFLS). 3 disulfides stabilise this stretch: cysteine 51–cysteine 65, cysteine 58–cysteine 69, and cysteine 64–cysteine 73.

The protein belongs to the conotoxin O2 superfamily. As to expression, expressed by the venom duct.

It is found in the secreted. The chain is Conotoxin VnMEKL-021 from Conus ventricosus (Mediterranean cone).